Here is a 939-residue protein sequence, read N- to C-terminus: UvrABC system protein A (939 aa).

Residue 32 to 39 participates in ATP binding; it reads GLSGSGKS. The segment at 252–279 adopts a C4-type zinc-finger fold; it reads CADCGISIDELAPRMFSFNSPFGKCERC. 2 consecutive ABC transporter domains span residues 309-588 and 608-936; these read WGDS…ENSL and GNGN…KYLK. Residue 640–647 coordinates ATP; it reads GVSGSGKS. The segment at 739–765 adopts a C4-type zinc-finger fold; it reads CEACSGDGIIKIEMQFLSDVYVPCEVC.

Belongs to the ABC transporter superfamily. UvrA family. In terms of assembly, forms a heterotetramer with UvrB during the search for lesions.

It is found in the cytoplasm. Its function is as follows. The UvrABC repair system catalyzes the recognition and processing of DNA lesions. UvrA is an ATPase and a DNA-binding protein. A damage recognition complex composed of 2 UvrA and 2 UvrB subunits scans DNA for abnormalities. When the presence of a lesion has been verified by UvrB, the UvrA molecules dissociate. This Clostridium perfringens (strain 13 / Type A) protein is UvrABC system protein A.